Here is a 679-residue protein sequence, read N- to C-terminus: Methionine--tRNA ligase (679 aa).

The 'HIGH' region signature appears at 15 to 25 (PYANGPIHLGH). Zn(2+)-binding residues include cysteine 146, cysteine 149, cysteine 159, and cysteine 162. A 'KMSKS' region motif is present at residues 332–336 (KMSKS). Lysine 335 contributes to the ATP binding site. One can recognise a tRNA-binding domain in the interval 578 to 679 (DFAKIDLRIA…EGAQPGMKVK (102 aa)).

The protein belongs to the class-I aminoacyl-tRNA synthetase family. MetG type 1 subfamily. Homodimer. Zn(2+) serves as cofactor.

It is found in the cytoplasm. It catalyses the reaction tRNA(Met) + L-methionine + ATP = L-methionyl-tRNA(Met) + AMP + diphosphate. Is required not only for elongation of protein synthesis but also for the initiation of all mRNA translation through initiator tRNA(fMet) aminoacylation. This is Methionine--tRNA ligase from Shewanella pealeana (strain ATCC 700345 / ANG-SQ1).